A 427-amino-acid polypeptide reads, in one-letter code: Putative FBD-associated F-box protein At3g50710 (427 aa).

Residues 1–53 (MDRISNLSDDLLLKIVSSLPTKDVVVTMLLSKRWKFLWMMVPKLRFDDEFELE) enclose the F-box domain. The region spanning 345-395 (HWEEPSSVPQCLLFHLNIFEWKYYNAGDEEKKVVAYILKNARQLKTATFSA) is the FBD domain.

The polypeptide is Putative FBD-associated F-box protein At3g50710 (Arabidopsis thaliana (Mouse-ear cress)).